Reading from the N-terminus, the 967-residue chain is A disintegrin and metalloproteinase with thrombospondin motifs 1 (967 aa).

The first 54 residues, 1-54 (MQPEVPLGSGKLKPCSDMGDIQRAAKFRSSQSAHMLLLLLASITMLLCVRGAHG), serve as a signal peptide directing secretion. Residues 55-252 (RPTEEDEELV…TGPGSIRKKR (198 aa)) constitute a propeptide that is removed on maturation. The interval 198–252 (RGSGGAKCGVMDEETLPTSNSGRESQNTPDQWPLRNPTPQGAGKPTGPGSIRKKR) is disordered. Residues 203 to 210 (AKCGVMDE) carry the Cysteine switch motif. A Zn(2+)-binding site is contributed by Cys205. Polar residues predominate over residues 213 to 227 (LPTSNSGRESQNTPD). Residues 258 to 467 (RYVETMLVAD…GHGECLMDKP (210 aa)) form the Peptidase M12B domain. 3 residues coordinate Ca(2+): Glu261, Asp344, and Asp351. Intrachain disulfides connect Cys333–Cys385, Cys362–Cys367, Cys379–Cys462, and Cys417–Cys446. Residue His401 coordinates Zn(2+). Glu402 is a catalytic residue. Residues His405 and His411 each contribute to the Zn(2+) site. The Ca(2+) site is built by Cys462 and Asp465. Residues 476-558 (DLPGTLYDAN…TDMKHFATPV (83 aa)) form the Disintegrin domain. 4 disulfide bridges follow: Cys488/Cys511, Cys499/Cys521, Cys506/Cys540, and Cys534/Cys545. N-linked (GlcNAc...) asparagine glycosylation is present at Asn547. Residues 559-614 (HGSWGPWGPWGDCSRTCGGGVQYTMRECDNPVPKNGGKYCEGKRVRYRSCNIEDCP) form the TSP type-1 1 domain. 3 disulfides stabilise this stretch: Cys571–Cys608, Cys575–Cys613, and Cys586–Cys598. Residues Asn720, Asn764, and Asn782 are each glycosylated (N-linked (GlcNAc...) asparagine). Residues 725–857 (KKISGTVTST…PFNAIPTFSE (133 aa)) form a spacer region. 2 consecutive TSP type-1 domains span residues 854-910 (TFSE…LPCP) and 911-967 (RWQV…TQCS). A glycan (N-linked (GlcNAc...) asparagine) is linked at Asn945.

Zn(2+) is required as a cofactor. In terms of processing, the precursor is cleaved by a furin endopeptidase. Post-translationally, glycosylated. Can be O-fucosylated by POFUT2 on a serine or a threonine residue found within the consensus sequence C1-X(2)-(S/T)-C2-G of the TSP type-1 repeat domains where C1 and C2 are the first and second cysteine residue of the repeat, respectively. Fucosylated repeats can then be further glycosylated by the addition of a beta-1,3-glucose residue by the glucosyltransferase, B3GALTL. Fucosylation mediates the efficient secretion of ADAMTS family members. Can also be C-glycosylated with one or two mannose molecules on tryptophan residues within the consensus sequence W-X-X-W of the TPRs, and N-glycosylated. These other glycosylations can also facilitate secretion.

It localises to the secreted. The protein localises to the extracellular space. The protein resides in the extracellular matrix. Its function is as follows. Metalloprotease which cleaves aggrecan, a cartilage proteoglycan, at the '1683-Glu-|-Leu-1684' site (within the chondroitin sulfate attachment domain), and may be involved in its turnover. Also cleaves COMP. Has angiogenic inhibitor activity. May play a critical role in follicular rupture. This Rattus norvegicus (Rat) protein is A disintegrin and metalloproteinase with thrombospondin motifs 1 (Adamts1).